We begin with the raw amino-acid sequence, 462 residues long: Chitinase 1 (462 aa).

An N-terminal signal peptide occupies residues 1 to 17; it reads MILNLIILLAISIVASA. Residues 18–291 form the GH18 domain; that stretch reads SNIAAYWGQN…NQLHQALSGS (274 aa). An N-linked (GlcNAc...) asparagine glycan is attached at Asn57. Glu147 functions as the Proton donor in the catalytic mechanism.

This sequence belongs to the glycosyl hydrolase 18 family. Chitinase class V subfamily.

The protein resides in the secreted. It carries out the reaction Random endo-hydrolysis of N-acetyl-beta-D-glucosaminide (1-&gt;4)-beta-linkages in chitin and chitodextrins.. Functionally, chitinase involved in the remodeling of chitin in the fungal cell wall. Plays a role in cell separation. The chain is Chitinase 1 (CHT1) from Candida albicans (strain SC5314 / ATCC MYA-2876) (Yeast).